A 589-amino-acid polypeptide reads, in one-letter code: Probable 9-cis-epoxycarotenoid dioxygenase NCED5, chloroplastic (589 aa).

A chloroplast-targeting transit peptide spans 1-45 (MACSYILTPNPTKLNLSFAPSDLDAPSPSSSVSFTNTKPRRRKLS). Low complexity predominate over residues 21-34 (SDLDAPSPSSSVSF). Positions 21–51 (SDLDAPSPSSSVSFTNTKPRRRKLSANSVSD) are disordered. The Fe cation site is built by histidine 287, histidine 336, histidine 401, and histidine 576.

It belongs to the carotenoid oxygenase family. As to quaternary structure, interacts in vitro with VAR3. It depends on Fe(2+) as a cofactor. Detected only in seeds.

It localises to the plastid. It is found in the chloroplast thylakoid membrane. The enzyme catalyses a 9-cis-epoxycarotenoid + O2 = a 12'-apo-carotenal + 2-cis,4-trans-xanthoxin. It catalyses the reaction 9-cis-violaxanthin + O2 = (3S,5R,6S)-5,6-epoxy-3-hydroxy-5,6-dihydro-12'-apo-beta-caroten-12'-al + 2-cis,4-trans-xanthoxin. The catalysed reaction is 9'-cis-neoxanthin + O2 = (3S,5R,6R)-3,5-dihydroxy-6,7-didehydro-5,6-dihydro-12'-apo-beta-caroten-12'-al + 2-cis,4-trans-xanthoxin. Its function is as follows. Has a 11,12(11',12') 9-cis epoxycarotenoid cleavage activity. Catalyzes the first step of abscisic-acid biosynthesis from carotenoids. The chain is Probable 9-cis-epoxycarotenoid dioxygenase NCED5, chloroplastic (NCED5) from Arabidopsis thaliana (Mouse-ear cress).